A 265-amino-acid chain; its full sequence is RNA-binding protein 7 (265 aa).

N-acetylglycine is present on Gly2. Positions 10–87 constitute an RRM domain; the sequence is RTLFVGNLET…RPIKIQFRSG (78 aa). 2 ZCCHC8 binding regions span residues 25 to 35 and 59 to 76; these read LLFELFHQAGP and HEVS…IKLF. The segment at 91 to 125 is disordered; it reads ASQDASVSYPQHHVGNLSPTSTSPNSYERTVGNVS. Residues 107–125 show a composition bias toward polar residues; sequence LSPTSTSPNSYERTVGNVS. Position 136 is a phosphoserine; by MAPKAPK2 (Ser136). Ser137 is subject to Phosphoserine. The residue at position 152 (Arg152) is an Omega-N-methylarginine. 2 disordered regions span residues 166 to 224 and 237 to 265; these read DQLG…HGSD and DDRN…SSRH. The segment covering 170-196 has biased composition (polar residues); sequence FSPSAQPHGHTFNQSSSSQWRQDALSS. At Ser203 the chain carries Phosphoserine. 2 stretches are compositionally biased toward basic and acidic residues: residues 207 to 224 and 237 to 256; these read LADR…HGSD and DDRN…DSSR.

Component of the nuclear exosome targeting (NEXT) complex composed of MTREX, ZCCHC8, and RBM7 that directs a subset of non-coding short-lived RNAs for exosomal degradation. Interacts with ZCCHC8 and SF3B2/SAP145. Binds to MTREX through ZCCHC8. Interacts with YWHAE and YWHAZ; these interactions are stress-dependent and RBM7 phosphorylation dependent; release RNA from the NEXT complex and may affect RNA targeting to the nuclear RNA exosomome for degradation. Interacts with MEPCE and LARP7, the core subunits of 7SK snRNP; upon genotoxic stress this interaction is enhanced, triggering the release of inactive P-TEFb complex from the core and P-TEFb complex activation. In terms of processing, phosphorylated at Ser-136 by MAPK14/p38-alpha-activated MAPKAPK2/MK2; this phosphorylation is stress-dependent; this phosphorylation decreases its RNA-binding capacity therefore affecting RNA nuclear exosome-mediated degradation. This phosphorylation mediates YWHAE and YWHAZ interactions.

It localises to the nucleus. The protein localises to the nucleoplasm. Its function is as follows. RNA-binding subunit of the trimeric nuclear exosome targeting (NEXT) complex, a complex that functions as an RNA exosome cofactor that directs a subset of non-coding short-lived RNAs for exosomal degradation. NEXT is involved in surveillance and turnover of aberrant transcripts and non-coding RNAs. Binds preferentially polyuridine sequences and associates with newly synthesized RNAs, including pre-mRNAs and short-lived exosome substrates such as promoter upstream transcripts (PROMPTs), enhancer RNAs (eRNAs), and 3'-extended products from small nuclear RNAs (snRNAs). Participates in several biological processes including DNA damage response (DDR) and stress response. During stress response, activation of the p38MAPK-MK2 pathway decreases RBM7-RNA-binding and subsequently the RNA exosome degradation activities, thereby modulating the turnover of non-coding transcriptome. Participates in DNA damage response (DDR), through its interaction with MEPCE and LARP7, the core subunits of 7SK snRNP complex, that release the positive transcription elongation factor b (P-TEFb) complex from the 7SK snRNP. In turn, activation of P-TEFb complex induces the transcription of P-TEFb-dependent DDR genes to promote cell viability. The chain is RNA-binding protein 7 from Mus musculus (Mouse).